Here is a 361-residue protein sequence, read N- to C-terminus: Phospho-N-acetylmuramoyl-pentapeptide-transferase (361 aa).

The next 10 membrane-spanning stretches (helical) occupy residues 25-45, 73-93, 97-117, 134-154, 168-188, 200-220, 237-257, 264-284, 289-309, and 338-358; these read RTVLAALTALIISFIVGPAMI, TMGGALILVSIAITTLLWADL, YVWIVLITTLGFGMIGWVDDY, LFWQSAIAILVALYLVLTAEL, VAVPLGVTGFVALTYFVIVGT, GLAIMPTVMISSALAIFSYVA, AGELAVFCGALAGAGLAFLWF, VFMGDVGALALGAALGIVTVI, IVMLIMGGVFVVETLSVMLQV, and QVVVRFWIITMMLVLFGLSSL.

This sequence belongs to the glycosyltransferase 4 family. MraY subfamily. Mg(2+) serves as cofactor.

It localises to the cell inner membrane. The catalysed reaction is UDP-N-acetyl-alpha-D-muramoyl-L-alanyl-gamma-D-glutamyl-meso-2,6-diaminopimeloyl-D-alanyl-D-alanine + di-trans,octa-cis-undecaprenyl phosphate = di-trans,octa-cis-undecaprenyl diphospho-N-acetyl-alpha-D-muramoyl-L-alanyl-D-glutamyl-meso-2,6-diaminopimeloyl-D-alanyl-D-alanine + UMP. It participates in cell wall biogenesis; peptidoglycan biosynthesis. In terms of biological role, catalyzes the initial step of the lipid cycle reactions in the biosynthesis of the cell wall peptidoglycan: transfers peptidoglycan precursor phospho-MurNAc-pentapeptide from UDP-MurNAc-pentapeptide onto the lipid carrier undecaprenyl phosphate, yielding undecaprenyl-pyrophosphoryl-MurNAc-pentapeptide, known as lipid I. The polypeptide is Phospho-N-acetylmuramoyl-pentapeptide-transferase (Nitrosospira multiformis (strain ATCC 25196 / NCIMB 11849 / C 71)).